Consider the following 230-residue polypeptide: MRLAQLSHESLNFPPPDRALREPNGLLAMGGDLSPQRLLNAYHRGIFPWFAAGDPILWWSPDPRAILLPQHFHLSRSMKRFHQKSPYRVTLNQRFRQVIEGCASDRQEGTWITYEVKLAWQRLHELGHAHSIEVWQDEELVGGMYGLALGQIFCGESMFSQGENASKTALLVFSRYFLQQGGKLIDCQVLNPHTQSLGAQEIPRASYLSYLHSLAFRPLSSECWSPQRLF.

Belongs to the L/F-transferase family.

It localises to the cytoplasm. It catalyses the reaction N-terminal L-lysyl-[protein] + L-leucyl-tRNA(Leu) = N-terminal L-leucyl-L-lysyl-[protein] + tRNA(Leu) + H(+). It carries out the reaction N-terminal L-arginyl-[protein] + L-leucyl-tRNA(Leu) = N-terminal L-leucyl-L-arginyl-[protein] + tRNA(Leu) + H(+). The enzyme catalyses L-phenylalanyl-tRNA(Phe) + an N-terminal L-alpha-aminoacyl-[protein] = an N-terminal L-phenylalanyl-L-alpha-aminoacyl-[protein] + tRNA(Phe). Its function is as follows. Functions in the N-end rule pathway of protein degradation where it conjugates Leu, Phe and, less efficiently, Met from aminoacyl-tRNAs to the N-termini of proteins containing an N-terminal arginine or lysine. This chain is Leucyl/phenylalanyl-tRNA--protein transferase, found in Erwinia tasmaniensis (strain DSM 17950 / CFBP 7177 / CIP 109463 / NCPPB 4357 / Et1/99).